The primary structure comprises 1188 residues: DNA-directed RNA polymerase subunit beta (1188 aa).

Belongs to the RNA polymerase beta chain family. As to quaternary structure, the RNAP catalytic core consists of 2 alpha, 1 beta, 1 beta' and 1 omega subunit. When a sigma factor is associated with the core the holoenzyme is formed, which can initiate transcription.

It carries out the reaction RNA(n) + a ribonucleoside 5'-triphosphate = RNA(n+1) + diphosphate. Functionally, DNA-dependent RNA polymerase catalyzes the transcription of DNA into RNA using the four ribonucleoside triphosphates as substrates. This is DNA-directed RNA polymerase subunit beta from Streptococcus pyogenes serotype M3 (strain ATCC BAA-595 / MGAS315).